The chain runs to 490 residues: Glutathione hydrolase 6 (490 aa).

The Cytoplasmic portion of the chain corresponds to 1–52 (MEPEAGPVLYQKLRVWEPSLESEEEEEEISEQLILDASGPHDSSGNKAGRLP). A helical; Signal-anchor for type II membrane protein membrane pass occupies residues 53-73 (GAWAQLVAALLLLAIGFSLAV). The Extracellular segment spans residues 74–490 (RQLCSSGASP…PSGCCPFQGF (417 aa)). N-linked (GlcNAc...) asparagine glycans are attached at residues Asn-160, Asn-165, and Asn-374.

Belongs to the gamma-glutamyltransferase family. In terms of assembly, heterodimer composed of the light and heavy chains. The active site is located in the light chain. Cleaved by autocatalysis into a large and a small subunit and the autocatalytic cleavage is essential to the functional activation of the enzyme.

The protein localises to the membrane. The enzyme catalyses an N-terminal (5-L-glutamyl)-[peptide] + an alpha-amino acid = 5-L-glutamyl amino acid + an N-terminal L-alpha-aminoacyl-[peptide]. It catalyses the reaction glutathione + H2O = L-cysteinylglycine + L-glutamate. The catalysed reaction is an S-substituted glutathione + H2O = an S-substituted L-cysteinylglycine + L-glutamate. The protein operates within sulfur metabolism; glutathione metabolism. Hydrolyzes and transfers gamma-glutamyl moieties from glutathione and other gamma-glutamyl compounds to acceptors. This chain is Glutathione hydrolase 6, found in Bos taurus (Bovine).